We begin with the raw amino-acid sequence, 225 residues long: Small ribosomal subunit protein uS3 (225 aa).

The region spanning Val18–Glu87 is the KH type-2 domain.

The protein belongs to the universal ribosomal protein uS3 family. In terms of assembly, part of the 30S ribosomal subunit.

In terms of biological role, binds the lower part of the 30S subunit head. The sequence is that of Small ribosomal subunit protein uS3 from Sulfurisphaera tokodaii (strain DSM 16993 / JCM 10545 / NBRC 100140 / 7) (Sulfolobus tokodaii).